Reading from the N-terminus, the 206-residue chain is Large ribosomal subunit protein bL17 (206 aa).

Over residues 130-141 the composition is skewed to basic and acidic residues; sequence ERARGTRFEARR. Residues 130-206 form a disordered region; the sequence is ERARGTRFEA…SGAGEQNSAN (77 aa). Low complexity-rich tracts occupy residues 160–181 and 189–200; these read TAAAVAVEAAEPAETPAEGAAG and DDSGIGDDSGAG.

The protein belongs to the bacterial ribosomal protein bL17 family. In terms of assembly, part of the 50S ribosomal subunit. Contacts protein L32.

The protein is Large ribosomal subunit protein bL17 of Frankia casuarinae (strain DSM 45818 / CECT 9043 / HFP020203 / CcI3).